We begin with the raw amino-acid sequence, 177 residues long: Large ribosomal subunit protein uL22 (177 aa).

The interval 118 to 177 (VESRPSREGRRGGAGESAGGARARRAQGSKAAAAKKAPASSSKKAATTTEASEEAKGGSQ) is disordered. Residues 121-130 (RPSREGRRGG) show a composition bias toward basic and acidic residues. The span at 145-167 (GSKAAAAKKAPASSSKKAATTTE) shows a compositional bias: low complexity.

The protein belongs to the universal ribosomal protein uL22 family. As to quaternary structure, part of the 50S ribosomal subunit.

Functionally, this protein binds specifically to 23S rRNA; its binding is stimulated by other ribosomal proteins, e.g. L4, L17, and L20. It is important during the early stages of 50S assembly. It makes multiple contacts with different domains of the 23S rRNA in the assembled 50S subunit and ribosome. The globular domain of the protein is located near the polypeptide exit tunnel on the outside of the subunit, while an extended beta-hairpin is found that lines the wall of the exit tunnel in the center of the 70S ribosome. The sequence is that of Large ribosomal subunit protein uL22 from Mycobacterium sp. (strain KMS).